Here is a 524-residue protein sequence, read N- to C-terminus: Probable glycine dehydrogenase (decarboxylating) subunit 2 (524 aa).

Lys-296 carries the N6-(pyridoxal phosphate)lysine modification.

This sequence belongs to the GcvP family. C-terminal subunit subfamily. As to quaternary structure, the glycine cleavage system is composed of four proteins: P, T, L and H. In this organism, the P 'protein' is a heterodimer of two subunits. It depends on pyridoxal 5'-phosphate as a cofactor.

The catalysed reaction is N(6)-[(R)-lipoyl]-L-lysyl-[glycine-cleavage complex H protein] + glycine + H(+) = N(6)-[(R)-S(8)-aminomethyldihydrolipoyl]-L-lysyl-[glycine-cleavage complex H protein] + CO2. In terms of biological role, the glycine cleavage system catalyzes the degradation of glycine. The P protein binds the alpha-amino group of glycine through its pyridoxal phosphate cofactor; CO(2) is released and the remaining methylamine moiety is then transferred to the lipoamide cofactor of the H protein. The polypeptide is Probable glycine dehydrogenase (decarboxylating) subunit 2 (Caulobacter vibrioides (strain ATCC 19089 / CIP 103742 / CB 15) (Caulobacter crescentus)).